Here is a 188-residue protein sequence, read N- to C-terminus: Elongation factor P (188 aa).

N6-(3,6-diaminohexanoyl)-5-hydroxylysine is present on Lys-34.

The protein belongs to the elongation factor P family. In terms of processing, may be beta-lysylated on the epsilon-amino group of Lys-34 by the combined action of EpmA and EpmB, and then hydroxylated on the C5 position of the same residue by EpmC (if this protein is present). Lysylation is critical for the stimulatory effect of EF-P on peptide-bond formation. The lysylation moiety may extend toward the peptidyltransferase center and stabilize the terminal 3-CCA end of the tRNA. Hydroxylation of the C5 position on Lys-34 may allow additional potential stabilizing hydrogen-bond interactions with the P-tRNA.

It is found in the cytoplasm. It participates in protein biosynthesis; polypeptide chain elongation. In terms of biological role, involved in peptide bond synthesis. Alleviates ribosome stalling that occurs when 3 or more consecutive Pro residues or the sequence PPG is present in a protein, possibly by augmenting the peptidyl transferase activity of the ribosome. Modification of Lys-34 is required for alleviation. The sequence is that of Elongation factor P from Xanthomonas campestris pv. campestris (strain B100).